A 102-amino-acid polypeptide reads, in one-letter code: Large ribosomal subunit protein bL21 (102 aa).

This sequence belongs to the bacterial ribosomal protein bL21 family. Part of the 50S ribosomal subunit. Contacts protein L20.

Its function is as follows. This protein binds to 23S rRNA in the presence of protein L20. The chain is Large ribosomal subunit protein bL21 from Geobacter sulfurreducens (strain ATCC 51573 / DSM 12127 / PCA).